A 100-amino-acid chain; its full sequence is Probable DNA-binding protein HU (100 aa).

The protein belongs to the bacterial histone-like protein family.

Its function is as follows. Histone-like DNA-binding protein which is capable of wrapping DNA to stabilize it, and thus to prevent its denaturation under extreme environmental conditions. The chain is Probable DNA-binding protein HU (hup) from Chlamydia pneumoniae (Chlamydophila pneumoniae).